The chain runs to 136 residues: NHL-repeat-containing protein 4 (136 aa).

2 NHL repeats span residues 48 to 91 and 93 to 132; these read QPLG…FPRV and PPICLQLEGLKRPLGMACAPQGQLVVADAGDNCIKLYQYL.

The chain is NHL-repeat-containing protein 4 (Nhlrc4) from Mus musculus (Mouse).